The chain runs to 530 residues: Membrane-associated transporter protein (530 aa).

Over 1–46 the chain is Cytoplasmic; that stretch reads MGSNSGQAGRHIYKSLADDGPFDSVEPPKRPTSRLIMHSMAMFGRE. A helical membrane pass occupies residues 47 to 67; it reads FCYAVEAAYVTPVLLSVGLPS. A topological domain (extracellular) is located at residue Ser-68. The helical transmembrane segment at 69-89 threads the bilayer; sequence LYSIVWFLSPILGFLLQPVVG. The Cytoplasmic portion of the chain corresponds to 90 to 110; the sequence is SASDHCRSRWGRRRPYILTLG. The chain crosses the membrane as a helical span at residues 111-131; that stretch reads VMMLVGMALYLNGATVVAALI. The Extracellular segment spans residues 132–138; that stretch reads ANPRRKL. Residues 139 to 159 traverse the membrane as a helical segment; it reads VWAISVTMIGVVLFDFAADFI. Over 160–184 the chain is Cytoplasmic; sequence DGPIKAYLFDVCSHQDKEKGLHYHA. A helical membrane pass occupies residues 185-205; sequence LFTGFGGALGYLLGAIDWAHL. Over 206-216 the chain is Extracellular; the sequence is ELGRLLGTEFQ. A helical membrane pass occupies residues 217-237; it reads VMFFFSALVLTLCFTVHLCSI. The Cytoplasmic portion of the chain corresponds to 238–318; that stretch reads SEAPLTEVAK…ALVNMPPHYR (81 aa). A helical transmembrane segment spans residues 319–339; the sequence is YLCISHLIGWTAFLSNMLFFT. Residues 340–366 are Extracellular-facing; the sequence is DFMGQIVYRGDPYSAHNSTEFLIYERG. Residue Asn-356 is glycosylated (N-linked (GlcNAc...) asparagine). Residues 367–387 form a helical membrane-spanning segment; sequence VEVGCWGLCINSVFSSLYSYF. The Cytoplasmic segment spans residues 388–398; that stretch reads QKVLVSYIGLK. The chain crosses the membrane as a helical span at residues 399 to 419; that stretch reads GLYFTGYLLFGLGTGFIGLFP. Residues 420–425 are Extracellular-facing; the sequence is NVYSTL. The helical transmembrane segment at 426–446 threads the bilayer; that stretch reads VLCSLFGVMSSTLYTVPFNLI. The Cytoplasmic portion of the chain corresponds to 447-477; the sequence is TEYHREEEKERQQAPGGDPDNSVRGKGMDCA. A helical membrane pass occupies residues 478–498; sequence TLTCMVQLAQILVGGGLGFLV. The Extracellular portion of the chain corresponds to 499 to 504; it reads NTAGTV. Residues 505–525 form a helical membrane-spanning segment; it reads VVVVITASAVALIGCCFVALF. Over 526-530 the chain is Cytoplasmic; it reads VRYVD.

It belongs to the glycoside-pentoside-hexuronide (GPH) cation symporter transporter (TC 2.A.2) family. Interacts with TYRP1. As to expression, expressed in mature melanocytes.

It localises to the melanosome membrane. The catalysed reaction is sucrose(out) + H(+)(out) = sucrose(in) + H(+)(in). It catalyses the reaction D-glucose(out) + H(+)(out) = D-glucose(in) + H(+)(in). Functionally, proton-associated glucose and sucrose transporter. May be able to transport also fructose. Expressed at a late melanosome maturation stage where functions as proton/glucose exporter which increase lumenal pH by decreasing glycolysis. Regulates melanogenesis by maintaining melanosome neutralization that is initially initiated by transient OCA2 and required for a proper function of the tyrosinase TYR. The chain is Membrane-associated transporter protein from Homo sapiens (Human).